Consider the following 62-residue polypeptide: Large ribosomal subunit protein bL33 (62 aa).

Belongs to the bacterial ribosomal protein bL33 family.

The sequence is that of Large ribosomal subunit protein bL33 from Trichodesmium erythraeum (strain IMS101).